The following is a 395-amino-acid chain: Allantoicase (395 aa).

This sequence belongs to the allantoicase family.

The catalysed reaction is allantoate + H2O = (S)-ureidoglycolate + urea. The protein operates within nitrogen metabolism; (S)-allantoin degradation; (S)-ureidoglycolate from allantoate (aminidohydrolase route): step 1/1. Utilization of purines as secondary nitrogen sources, when primary sources are limiting. The protein is Allantoicase (allc) of Danio rerio (Zebrafish).